A 154-amino-acid polypeptide reads, in one-letter code: UPF0178 protein YaiI (154 aa).

The protein belongs to the UPF0178 family.

This Escherichia coli (strain ATCC 8739 / DSM 1576 / NBRC 3972 / NCIMB 8545 / WDCM 00012 / Crooks) protein is UPF0178 protein YaiI.